A 148-amino-acid chain; its full sequence is Hemoglobin subunit beta-2 (148 aa).

The Globin domain occupies 3-148 (EWTDAERTAI…VVSALCRQYH (146 aa)). The heme b site is built by histidine 64 and histidine 93.

Heterotetramer of two alpha chains and two beta chains. As to expression, red blood cells.

Involved in oxygen transport from gills to the various peripheral tissues. In Danio rerio (Zebrafish), this protein is Hemoglobin subunit beta-2 (ba2).